A 234-amino-acid polypeptide reads, in one-letter code: Phosphoglycolate phosphatase (234 aa).

Asp8 functions as the Nucleophile in the catalytic mechanism. Positions 8 and 10 each coordinate Mg(2+). Lys157 contacts substrate. Positions 180 and 184 each coordinate Mg(2+).

Belongs to the archaeal SPP-like hydrolase family. Mg(2+) is required as a cofactor.

It catalyses the reaction 2-phosphoglycolate + H2O = glycolate + phosphate. Its function is as follows. Catalyzes the dephosphorylation of 2-phosphoglycolate. This is Phosphoglycolate phosphatase from Methanoculleus marisnigri (strain ATCC 35101 / DSM 1498 / JR1).